The chain runs to 80 residues: Defensin-like protein 291 (80 aa).

The N-terminal stretch at 1-29 is a signal peptide; it reads MAASKTTIFIVFVLCLSCTLLVNISGIQA. 3 disulfide bridges follow: Cys50-Cys70, Cys56-Cys75, and Cys62-Cys77.

Belongs to the DEFL family.

The protein resides in the secreted. This chain is Defensin-like protein 291, found in Arabidopsis thaliana (Mouse-ear cress).